The chain runs to 343 residues: MSFSPQEALQRTIEHREIFFDEMVDLMRQIMRGDVSPMMTAAILTGLRVKKETIDEIAAAATVMREFALAVPVADSTHLVDIVGTGGDGSHTFNISTCAMFVAAAAGARVAKHGNRSVSSKSGSADAVEALGAAIELQPAQVAAAIEQTGIGFMFAPIHHPSMKVVAPVRREMGVRTIFNILGPLTNPASAPSVLMGVFHPDLVGIQARVLRELGTERAMVVWGRDNMDEISLGAGTLVGELRDGKVREYEIHPEDFGIAMSASRNLRVDGPEQSIAMLRAVLDNTPGPALDIVALNAGAALYVAGVASDIGDGLARARAAIANGSARQRLQQYVDTTRTLVA.

5-phospho-alpha-D-ribose 1-diphosphate-binding positions include Gly-84, 87 to 88 (GD), Thr-92, 94 to 97 (NIST), 112 to 120 (KHGNRSVSS), and Ser-124. An anthranilate-binding site is contributed by Gly-84. Ser-96 contributes to the Mg(2+) binding site. Asn-115 serves as a coordination point for anthranilate. Arg-170 is an anthranilate binding site. Residues Asp-229 and Glu-230 each coordinate Mg(2+).

The protein belongs to the anthranilate phosphoribosyltransferase family. In terms of assembly, homodimer. The cofactor is Mg(2+).

The catalysed reaction is N-(5-phospho-beta-D-ribosyl)anthranilate + diphosphate = 5-phospho-alpha-D-ribose 1-diphosphate + anthranilate. It functions in the pathway amino-acid biosynthesis; L-tryptophan biosynthesis; L-tryptophan from chorismate: step 2/5. In terms of biological role, catalyzes the transfer of the phosphoribosyl group of 5-phosphorylribose-1-pyrophosphate (PRPP) to anthranilate to yield N-(5'-phosphoribosyl)-anthranilate (PRA). The sequence is that of Anthranilate phosphoribosyltransferase from Stenotrophomonas maltophilia (strain R551-3).